A 51-amino-acid polypeptide reads, in one-letter code: Sec-independent protein translocase protein TatA (51 aa).

Residues 1–21 (MGMSFSHLLIILLIIFVLFGA) form a helical membrane-spanning segment.

This sequence belongs to the TatA/E family. As to quaternary structure, the Tat system comprises two distinct complexes: a TatABC complex, containing multiple copies of TatA, TatB and TatC subunits, and a separate TatA complex, containing only TatA subunits. Substrates initially bind to the TatABC complex, which probably triggers association of the separate TatA complex to form the active translocon.

It is found in the cell inner membrane. In terms of biological role, part of the twin-arginine translocation (Tat) system that transports large folded proteins containing a characteristic twin-arginine motif in their signal peptide across membranes. TatA could form the protein-conducting channel of the Tat system. The chain is Sec-independent protein translocase protein TatA from Rickettsia bellii (strain RML369-C).